Here is a 65-residue protein sequence, read N- to C-terminus: Large ribosomal subunit protein bL35 (65 aa).

Belongs to the bacterial ribosomal protein bL35 family.

The polypeptide is Large ribosomal subunit protein bL35 (Synechococcus sp. (strain WH7803)).